Here is a 602-residue protein sequence, read N- to C-terminus: UvrABC system protein C (602 aa).

A GIY-YIG domain is found at 17 to 94 (KTSGCYKMYS…IKKYKPTYNI (78 aa)). Residues 199–234 (SKLLNDIEIKMKEVIMKENFEAAIKLKETKKSLIEI) form the UVR domain.

This sequence belongs to the UvrC family. In terms of assembly, interacts with UvrB in an incision complex.

The protein localises to the cytoplasm. The UvrABC repair system catalyzes the recognition and processing of DNA lesions. UvrC both incises the 5' and 3' sides of the lesion. The N-terminal half is responsible for the 3' incision and the C-terminal half is responsible for the 5' incision. This Borrelia recurrentis (strain A1) protein is UvrABC system protein C.